Consider the following 103-residue polypeptide: MATYAIVKTGGKQYKVAVGDVVKVEKLESEPGAKVSLPVALVVDGAAVTSDADALAKVAVTGEVLEHVKGPKIRIHKFKNKTGYHKRQGHRQQLTVLKVTGIK.

This sequence belongs to the bacterial ribosomal protein bL21 family. Part of the 50S ribosomal subunit. Contacts protein L20.

Functionally, this protein binds to 23S rRNA in the presence of protein L20. The chain is Large ribosomal subunit protein bL21 from Mycobacterium marinum (strain ATCC BAA-535 / M).